The chain runs to 629 residues: MHFHERFDVIVVGGGHAGTEAALAAARMGSKTLLLTHNLDTLGQMSCNPAIGGIGKGHLVKEIDALGGAMAIATDYAGIQFRTLNSSKGPAVRATRAQADRALYRQKIQNILQNQANLRIFQQAVDDLVVDNDRVVGVVTQMGLAFEAPAVVLTAGTFLSGKIHIGLENYSGGRAGDPPSIALAHRLRELPIRVGRLKTGTPPRIDANTIDFTQMTEQKGDTPLPVMSFMGDVSHHPKQISCWITHTNEKTHDIIRGGLDRSPMYSGVIEGIGPRYCPSIEDKIHRFSDKSSHQIFIEPEGLNTNEIYPNGISTSLPFDVQLNLVRSIQGMENAEIVRPGYAIEYDYFDPRDLKNSLETKTINGLFFAGQINGTTGYEEAGAQGLLAGMNAALQVQGKEAWCPRRDEAYIGVLVDDLSTLGTKEPYRMFTSRAEYRLLLREDNADLRLTAKGRELGLVDDARWASFSEKMESIELELQRLRSQWIHPNSPLVPVLNPHLNTPISREASFEELLRRPEMDYSKLMQIEGFGPGLADPLAAEQVQIQVKYSGYIQRQQEEINKAVRNENTGLPLNLDYKEVPGLSNEVIAKLNSHKPETIGQASRISGITPAAISILLVHLKKRGLLRKSA.

FAD contacts are provided by residues 13-18 (GGGHAG), Val-125, and Ser-180. 273–287 (GPRYCPSIEDKIHRF) is a binding site for NAD(+). Residue Gln-370 coordinates FAD.

This sequence belongs to the MnmG family. Homodimer. Heterotetramer of two MnmE and two MnmG subunits. FAD serves as cofactor.

Its subcellular location is the cytoplasm. In terms of biological role, NAD-binding protein involved in the addition of a carboxymethylaminomethyl (cmnm) group at the wobble position (U34) of certain tRNAs, forming tRNA-cmnm(5)s(2)U34. This chain is tRNA uridine 5-carboxymethylaminomethyl modification enzyme MnmG, found in Shewanella sp. (strain ANA-3).